The following is a 156-amino-acid chain: ATP synthase subunit b (156 aa).

Residues 11-31 (AIAFVLFVLFCMKYVWPPIMA) traverse the membrane as a helical segment.

It belongs to the ATPase B chain family. F-type ATPases have 2 components, F(1) - the catalytic core - and F(0) - the membrane proton channel. F(1) has five subunits: alpha(3), beta(3), gamma(1), delta(1), epsilon(1). F(0) has three main subunits: a(1), b(2) and c(10-14). The alpha and beta chains form an alternating ring which encloses part of the gamma chain. F(1) is attached to F(0) by a central stalk formed by the gamma and epsilon chains, while a peripheral stalk is formed by the delta and b chains.

The protein localises to the cell inner membrane. Its function is as follows. F(1)F(0) ATP synthase produces ATP from ADP in the presence of a proton or sodium gradient. F-type ATPases consist of two structural domains, F(1) containing the extramembraneous catalytic core and F(0) containing the membrane proton channel, linked together by a central stalk and a peripheral stalk. During catalysis, ATP synthesis in the catalytic domain of F(1) is coupled via a rotary mechanism of the central stalk subunits to proton translocation. In terms of biological role, component of the F(0) channel, it forms part of the peripheral stalk, linking F(1) to F(0). The sequence is that of ATP synthase subunit b from Cronobacter sakazakii (strain ATCC BAA-894) (Enterobacter sakazakii).